Reading from the N-terminus, the 178-residue chain is uncharacterized protein (178 aa).

Positions 1–19 (MKKNIHILGASGVGTSTLG) are cleaved as a signal peptide.

This is an uncharacterized protein from Bacillus subtilis (strain 168).